The following is a 439-amino-acid chain: Proton pump-interactor 4 (439 aa).

Positions 286 to 354 (KEEKEIDEET…AKKKKAVCKS (69 aa)) form a coiled coil. Residues 415–435 (LWVWTVSSAAVALPLALLVVF) form a helical membrane-spanning segment.

It belongs to the plant Proton pump-interactor protein family.

The protein resides in the cell membrane. It localises to the endoplasmic reticulum membrane. Its function is as follows. May regulate plasma membrane ATPase activity. The sequence is that of Proton pump-interactor 4 (PPI4) from Arabidopsis thaliana (Mouse-ear cress).